The primary structure comprises 313 residues: DDRGK domain-containing protein 1 (313 aa).

Residues 1–28 (MVSPVVYLVVAALLVGLILFLTRGRGRA) traverse the membrane as a helical segment. Residues 1 to 113 (MVSPVVYLVV…IEKPVETHLS (113 aa)) are mediates interaction with CDK5RAP3. At 29–313 (AAAAQEPLHN…GRETPAQAPA (285 aa)) the chain is on the cytoplasmic side. The interval 40 to 88 (EVPAAAGRVARPQPLEPEEQRAAGRPRRRRDLGSRLQAQRRAQRVAWAD) is disordered. A phosphoserine mark is found at Ser-73 and Ser-113. Low complexity predominate over residues 73–87 (SRLQAQRRAQRVAWA). Residues 117–215 (GAKKLRKLEE…MTEEQSHSFL (99 aa)) form a mediates interaction with TRIP4 region. Residues 130 to 185 (RKAQREAEEAEREERKRLESQREAEWKKEEERLRLEEEQKEEEERKAQEEQAQREH) form a disordered region. The UFM1-interacting motif (UFIM) motif lies at 194–208 (TFVVVEEGVGETMTE). Residues 215 to 313 (LAEFINYIKQ…GRETPAQAPA (99 aa)) form a mediates interaction with UFL1 region. The region spanning 228–272 (VLLEDLASQVGLRTQDTINRIQDLLAEGTLTGVIDDRGKFIYITP) is the PCI domain. Lys-266 is covalently cross-linked (Glycyl lysine isopeptide (Lys-Gly) (interchain with G-Cter in UFM1)).

It belongs to the DDRGK1 family. In terms of assembly, component of the UFM1 ribosome E3 ligase (UREL) complex, composed of UFL1, DDRGK1 and CDK5RAP3. Interacts with (unphosphorylated) ERN1/IRE1-alpha; interaction is dependent on UFM1 and takes place in response to endoplasmic reticulum stress, regulating ERN1/IRE1-alpha stability. Interacts with NFKBIA. Interacts with SOX9. In terms of processing, ubiquitinated. Ubiquitination probably triggers proteasomal degradation and is negatively regulated by UFL1, the enzyme involved in the ufmylation of DDRGK1. Ufmylated; conjugated to ubiquitin-like protein UFM1, probably at Lys-266 by UFL1. The relevance of ufmylation is however unclear: as DDRGK1 acts as a substrate adapter for ufmylation, it is uncertain whether ufmylation is a collateral effect of the ufmylation process or whether it is required to regulate its activity.

It localises to the endoplasmic reticulum membrane. Component of the UFM1 ribosome E3 ligase (UREL) complex, a multiprotein complex that catalyzes ufmylation of endoplasmic reticulum-docked proteins. The UREL complex plays a key role in ribosome recycling by mediating mono-ufmylation of the RPL26/uL24 subunit of the 60S ribosome following ribosome dissociation: ufmylation weakens the junction between post-termination 60S subunits and SEC61 translocons, promoting release and recycling of the large ribosomal subunit from the endoplasmic reticulum membrane. Ufmylation of RPL26/uL24 and subsequent 60S ribosome recycling either take place after normal termination of translation or after ribosome stalling during cotranslational translocation at the endoplasmic reticulum. Within the UREL complex, DDRGK1 tethers the complex to the endoplasmic reticulum membrane to restrict its activity to endoplasmic reticulum-docked ribosomes and acts as an ufmylation 'reader': following RPL26/uL24 ufmylation, DDRGK1 specifically binds to ufmylated RPL26/uL24 via its UFIM motif, resulting in stable association between the 60S ribosome and the UREL complex, followed by dissociation of the 60S ribosome subunit from the endoplasmic reticulum membrane. The UREL complex is also involved in reticulophagy in response to endoplasmic reticulum stress by promoting ufmylation of proteins such as CYB5R3 and RPN1, thereby promoting lysosomal degradation of ufmylated proteins. Ufmylation-dependent reticulophagy inhibits the unfolded protein response (UPR) by regulating ERN1/IRE1-alpha stability. Acts as a regulator of immunity by promoting differentiation of B-cells into plasma cells: acts by promoting expansion of the endoplasmic reticulum and regulating the unfolded protein response (UPR). May also be required for TRIP4 ufmylation. May play a role in NF-kappa-B-mediated transcription through regulation of the phosphorylation and the degradation of NFKBIA, the inhibitor of NF-kappa-B. Plays a role in cartilage development through SOX9, inhibiting the ubiquitin-mediated proteasomal degradation of this transcriptional regulator. Required for stabilization and ufmylation of ATG9A. This is DDRGK domain-containing protein 1 from Bos taurus (Bovine).